Consider the following 370-residue polypeptide: Protein phosphatase 2C homolog 2 (370 aa).

Residues 23–291 form the PPM-type phosphatase domain; it reads HFGVSHMQGW…DNMTICIVAF (269 aa). Positions 63, 64, 233, and 282 each coordinate Mn(2+). A phosphoserine mark is found at Ser-355 and Ser-357.

This sequence belongs to the PP2C family. As to quaternary structure, monomer. Requires Mg(2+) as cofactor. Mn(2+) serves as cofactor.

It localises to the nucleus. The protein localises to the cytoplasm. It is found in the cytosol. The catalysed reaction is O-phospho-L-seryl-[protein] + H2O = L-seryl-[protein] + phosphate. It catalyses the reaction O-phospho-L-threonyl-[protein] + H2O = L-threonyl-[protein] + phosphate. Activity is reduced when phosphosrylated at Ser-355/Ser-357. Functionally, dephosphorylating regulator for many key proteins. Has an important role in osmotic stability and cell shape control. It may negatively regulate the osmosensing signal transmitted through wis1 map kinase. The protein is Protein phosphatase 2C homolog 2 (ptc2) of Schizosaccharomyces pombe (strain 972 / ATCC 24843) (Fission yeast).